The primary structure comprises 217 residues: Probable GTP-binding protein EngB (217 aa).

The EngB-type G domain occupies 37–214 (SGLEVAFAGR…RAAMARLIGD (178 aa)). Residues 45–52 (GRSNVGKS), 72–76 (GRTQE), 92–95 (DMPG), 159–162 (TKAD), and 193–195 (TSS) each bind GTP. 2 residues coordinate Mg(2+): serine 52 and threonine 74.

This sequence belongs to the TRAFAC class TrmE-Era-EngA-EngB-Septin-like GTPase superfamily. EngB GTPase family. Requires Mg(2+) as cofactor.

Its function is as follows. Necessary for normal cell division and for the maintenance of normal septation. This chain is Probable GTP-binding protein EngB, found in Nitrobacter winogradskyi (strain ATCC 25391 / DSM 10237 / CIP 104748 / NCIMB 11846 / Nb-255).